The primary structure comprises 432 residues: MTELISIKDSSKHVDQEVKMHVWLTDKRSSGKIIFLQLRDGTAFFQGVIRKNDVSEEVFEAAKSLRQEASFYITGTVHEDKRSHFGYEIQISDLEIVSNNEGYPIGNKEHGVDFLLDNRHLWLRSKRPFAIMQIRNTMFKATVDFFEKEGFIKFDAPIFMHSAPEGTTQLFHVEYFNNDAYLSQSGQLYGEAGAMAYGKIFTFGPTFRAEESKGRRHMTEFWMMEPEMAWMHQDESLDIQERYLAYMVKQVLENNEYELKILGRDPEKLRPTTEGNFTRLSYDDAIKMLQEAGRDIKWGDDFGAPDEGYISEQFDRPVFIVNYPTTIKPFYMKKNPDNPKEYLCADVIAPEGYGEIFGGSEREGNYEILKQQIEEAGLNLEDYQWYLDLRKFGGVPHSGFGMGFERTIAWICKLDHIREAIPFPRLINRMQP.

Belongs to the class-II aminoacyl-tRNA synthetase family. In terms of assembly, homodimer.

The protein localises to the cytoplasm. The enzyme catalyses tRNA(Asn) + L-asparagine + ATP = L-asparaginyl-tRNA(Asn) + AMP + diphosphate + H(+). The sequence is that of Asparagine--tRNA ligase from Lactobacillus johnsonii (strain CNCM I-12250 / La1 / NCC 533).